A 79-amino-acid polypeptide reads, in one-letter code: MKLTCVLIITVLFLTASQLITADYSRGQRQYRAVRLGDEMRNFKGARDCGGQGEGCYTQPCCPGLRCRGGGTGGGSCQP.

Residues 1 to 22 (MKLTCVLIITVLFLTASQLITA) form the signal peptide. Residues 23–47 (DYSRGQRQYRAVRLGDEMRNFKGAR) constitute a propeptide that is removed on maturation. 3 disulfide bridges follow: Cys49/Cys62, Cys56/Cys67, and Cys61/Cys77.

This sequence belongs to the conotoxin O1 superfamily. In terms of tissue distribution, expressed by the venom duct.

The protein resides in the secreted. This Conus vexillum (Flag cone) protein is Conotoxin 8.